Consider the following 333-residue polypeptide: Glycerol-3-phosphate dehydrogenase [NAD(P)+] (333 aa).

NADPH is bound by residues W11, R34, and K107. Residues K107, G136, and S138 each contribute to the sn-glycerol 3-phosphate site. A140 lines the NADPH pocket. The sn-glycerol 3-phosphate site is built by K191, D244, S254, R255, and N256. K191 (proton acceptor) is an active-site residue. R255 provides a ligand contact to NADPH. Residues I279 and E281 each coordinate NADPH.

The protein belongs to the NAD-dependent glycerol-3-phosphate dehydrogenase family.

The protein resides in the cytoplasm. The enzyme catalyses sn-glycerol 3-phosphate + NAD(+) = dihydroxyacetone phosphate + NADH + H(+). It catalyses the reaction sn-glycerol 3-phosphate + NADP(+) = dihydroxyacetone phosphate + NADPH + H(+). It participates in membrane lipid metabolism; glycerophospholipid metabolism. Its function is as follows. Catalyzes the reduction of the glycolytic intermediate dihydroxyacetone phosphate (DHAP) to sn-glycerol 3-phosphate (G3P), the key precursor for phospholipid synthesis. This is Glycerol-3-phosphate dehydrogenase [NAD(P)+] from Nitrosospira multiformis (strain ATCC 25196 / NCIMB 11849 / C 71).